A 405-amino-acid polypeptide reads, in one-letter code: Cysteine desulfurase IscS (405 aa).

Residues 75–76, Asn155, Gln183, and 203–205 each bind pyridoxal 5'-phosphate; these read AT and SGH. Lys206 bears the N6-(pyridoxal phosphate)lysine mark. Thr243 is a pyridoxal 5'-phosphate binding site. Catalysis depends on Cys329, which acts as the Cysteine persulfide intermediate. Cys329 provides a ligand contact to [2Fe-2S] cluster.

Belongs to the class-V pyridoxal-phosphate-dependent aminotransferase family. NifS/IscS subfamily. In terms of assembly, homodimer. Forms a heterotetramer with IscU, interacts with other sulfur acceptors. The cofactor is pyridoxal 5'-phosphate.

It is found in the cytoplasm. It catalyses the reaction (sulfur carrier)-H + L-cysteine = (sulfur carrier)-SH + L-alanine. It participates in cofactor biosynthesis; iron-sulfur cluster biosynthesis. In terms of biological role, master enzyme that delivers sulfur to a number of partners involved in Fe-S cluster assembly, tRNA modification or cofactor biosynthesis. Catalyzes the removal of elemental sulfur atoms from cysteine to produce alanine. Functions as a sulfur delivery protein for Fe-S cluster synthesis onto IscU, an Fe-S scaffold assembly protein, as well as other S acceptor proteins. The polypeptide is Cysteine desulfurase IscS (Pseudoalteromonas translucida (strain TAC 125)).